A 1712-amino-acid chain; its full sequence is Latent-transforming growth factor beta-binding protein 1 (1712 aa).

The N-terminal stretch at 1 to 23 (MAGAWLRWGLLLWAGLLAWSAHG) is a signal peptide. Positions 65-118 (TAASSRALAGPPAERTRRTSQPGGAALPGLRSPLPPEPARPGGPSRQLHSKAGA) are disordered. The EGF-like 1 domain occupies 181–213 (TKPSCVPPCQNGGMCLRPQLCVCKPGSKGKACE). Cystine bridges form between Cys-185-Cys-195, Cys-189-Cys-201, and Cys-203-Cys-212. Asn-339 and Asn-370 each carry an N-linked (GlcNAc...) asparagine glycan. In terms of domain architecture, EGF-like 2 spans 391-423 (RVVICHLPCMNGGQCSSRDKCQCPPNFTGKLCQ). 6 disulfide bridges follow: Cys-395/Cys-405, Cys-399/Cys-411, Cys-413/Cys-422, Cys-551/Cys-573, Cys-560/Cys-586, and Cys-574/Cys-589. N-linked (GlcNAc...) asparagine glycosylation is present at Asn-416. Positions 549-601 (GRCFQETIGSQCGKALPGLSKQEDCCGTVGTSWGFNKCQKCPKKQSYHGYTQM) constitute a TB 1 domain. An N-linked (GlcNAc...) asparagine glycan is attached at Asn-612. The EGF-like 3; calcium-binding domain occupies 618-658 (DINECQLQGVCPNGECLNTMGSYRCSCKMGFGPDPTFSSCV). 7 disulfides stabilise this stretch: Cys-622/Cys-633, Cys-628/Cys-642, Cys-644/Cys-657, Cys-671/Cys-694, Cys-681/Cys-706, Cys-695/Cys-709, and Cys-696/Cys-721. A glycan (O-linked (Glc) serine) is linked at Ser-639. In terms of domain architecture, TB 2 spans 669-721 (GPCYRLVSPGRHCMHPLSVHLTKQICCCSVGKAWGPHCEKCPLPGTAAFKEIC). A disordered region spans residues 753 to 799 (NTQPVAKSTHPPPLPAKEEPVEALTSSWEHGPRGAEPEVVTAPPEKE). O-linked (GalNAc...) threonine glycans are attached at residues Thr-761 and Thr-793. An EGF-like 4; calcium-binding domain is found at 865-906 (EINECTVNPDICGAGHCINLPVRYTCICYEGYKFSEQLRKCV). 37 cysteine pairs are disulfide-bonded: Cys-869-Cys-881, Cys-876-Cys-890, Cys-892-Cys-905, Cys-911-Cys-923, Cys-918-Cys-932, Cys-934-Cys-947, Cys-953-Cys-964, Cys-959-Cys-973, Cys-976-Cys-988, Cys-994-Cys-1005, Cys-1000-Cys-1014, Cys-1017-Cys-1028, Cys-1034-Cys-1045, Cys-1040-Cys-1054, Cys-1056-Cys-1069, Cys-1075-Cys-1086, Cys-1081-Cys-1095, Cys-1097-Cys-1110, Cys-1116-Cys-1127, Cys-1122-Cys-1136, Cys-1138-Cys-1151, Cys-1157-Cys-1169, Cys-1164-Cys-1178, Cys-1180-Cys-1192, Cys-1198-Cys-1210, Cys-1204-Cys-1219, Cys-1221-Cys-1234, Cys-1240-Cys-1252, Cys-1246-Cys-1261, Cys-1263-Cys-1276, Cys-1282-Cys-1294, Cys-1289-Cys-1303, Cys-1305-Cys-1319, Cys-1340-Cys-1363, Cys-1350-Cys-1375, Cys-1364-Cys-1380, and Cys-1365-Cys-1392. The EGF-like 5; calcium-binding domain maps to 907 to 948 (DIDECAQVRHLCSQGRCENTEGSFLCVCPAGFMASEEGTNCI). Ser-929 carries an O-linked (Glc) serine glycan. Positions 949–989 (DVDECLRPDMCRDGRCINTAGAFRCEYCDSGYRMSRRGYCE) constitute an EGF-like 6; calcium-binding domain. Asn-966 is subject to (3R)-3-hydroxyasparagine. Residues 990 to 1029 (DIDECLKPSTCPEEQCVNTPGSYQCVPCTEGFRGWNGQCL) form the EGF-like 7; calcium-binding domain. Ser-1011 carries O-linked (Glc) serine glycosylation. An EGF-like 8; calcium-binding domain is found at 1030–1070 (DVDECLQPKVCTNGSCTNLEGSYMCSCHRGYSPTPDHRHCQ). Asn-1042 carries an N-linked (GlcNAc...) asparagine glycan. Ser-1051 carries an O-linked (Glc) serine glycan. Residues 1071–1111 (DIDECQQGNLCMNGQCRNTDGSFRCTCGQGYQLSAAKDQCE) enclose the EGF-like 9; calcium-binding domain. One can recognise an EGF-like 10; calcium-binding domain in the interval 1112–1152 (DIDECEHHHLCSHGQCRNTEGSFQCVCNQGYRASVLGDHCE). Residue Asn-1129 is modified to (3R)-3-hydroxyasparagine. Residue Ser-1133 is glycosylated (O-linked (Glc) serine). Residues 1153 to 1193 (DINECLEDSSVCQGGDCINTAGSYDCTCPDGFQLNDNKGCQ) enclose the EGF-like 11; calcium-binding domain. An EGF-like 12; calcium-binding domain is found at 1194–1235 (DINECAQPGLCGSHGECLNTQGSFHCVCEQGFSISADGRTCE). The O-linked (Glc) serine glycan is linked to Ser-1216. Residues 1236 to 1277 (DIDECVNNTVCDSHGFCDNTAGSFRCLCYQGFQAPQDGQGCV) enclose the EGF-like 13; calcium-binding domain. The N-linked (GlcNAc...) asparagine glycan is linked to Asn-1242. Residues 1278-1320 (DVNECELLSGVCGEAFCENVEGSFLCVCADENQEYSPMTGQCR) enclose the EGF-like 14; calcium-binding domain. Residues 1335–1402 (EEKKECYYNL…PRGKGLVPAG (68 aa)) form an 8-Cys3 region region. Positions 1338–1392 (KECYYNLNDASLCDNVLAPNVTKQECCCTSGAGWGDNCEIFPCPVQGTAEFTEMC) constitute a TB 3 domain. An N-linked (GlcNAc...) asparagine glycan is attached at Asn-1357. A Phosphoserine modification is found at Ser-1405. One can recognise an EGF-like 15; calcium-binding domain in the interval 1415-1457 (DADECLLFGEEICKNGYCLNTQPGYECYCKQGTYYDPVKLQCF). Cystine bridges form between Cys-1419–Cys-1432, Cys-1427–Cys-1441, Cys-1443–Cys-1456, Cys-1462–Cys-1473, Cys-1468–Cys-1482, Cys-1484–Cys-1497, Cys-1517–Cys-1541, Cys-1527–Cys-1553, Cys-1542–Cys-1556, and Cys-1543–Cys-1568. The EGF-like 16; calcium-binding domain occupies 1458 to 1498 (DMDECQDPNSCIDGQCVNTEGSYNCFCTHPMVLDASEKRCV). Ser-1479 carries O-linked (Glc) serine glycosylation. The interval 1498 to 1712 (VQPTESNEQI…LNLDKESDLE (215 aa)) is C-terminal domain. In terms of domain architecture, TB 4 spans 1515–1568 (DLCWEHLSEEYVCSRPLVGKQTTYTECCCLYGEAWGMQCALCPMKDSDDYAQLC). Phosphoserine occurs at positions 1588 and 1607. Positions 1612-1652 (QAEECGILNGCENGRCVRVQEGYTCDCFDGYHLDMAKMTCV) constitute an EGF-like 17 domain. Intrachain disulfides connect Cys-1616–Cys-1627, Cys-1622–Cys-1636, Cys-1638–Cys-1651, Cys-1657–Cys-1672, Cys-1667–Cys-1681, and Cys-1683–Cys-1696. The EGF-like 18; calcium-binding domain maps to 1653 to 1697 (DVNECSELNNRMSLCKNAKCINTEGSYKCLCLPGYIPSDKPNYCT). O-linked (Glc) serine glycosylation occurs at Ser-1678.

The protein belongs to the LTBP family. Interacts with TGFB1; associates via disulfide bonds with the Latency-associated peptide chain (LAP) regulatory chain of TGFB1, leading to regulate activation of TGF-beta-1. LTBP1 does not bind directly to TGF-beta-1, the active chain of TGFB1. Interacts (via C-terminal domain) with FBN1 (via N-terminal domain). Interacts with FBN2. Interacts with ADAMTSL2. Interacts with EFEMP2. In terms of processing, contains hydroxylated asparagine residues. Two intrachain disulfide bonds from the TB3 domain are rearranged upon TGFB1 binding, and form interchain bonds with TGFB1 propeptide, anchoring it to the extracellular matrix. Post-translationally, O-glycosylated on serine residues by POGLUT2 and POGLUT3.

It localises to the secreted. Its subcellular location is the extracellular space. The protein localises to the extracellular matrix. Key regulator of transforming growth factor beta (TGFB1, TGFB2 and TGFB3) that controls TGF-beta activation by maintaining it in a latent state during storage in extracellular space. Associates specifically via disulfide bonds with the Latency-associated peptide (LAP), which is the regulatory chain of TGF-beta, and regulates integrin-dependent activation of TGF-beta. Outcompeted by LRRC32/GARP for binding to LAP regulatory chain of TGF-beta. In Mus musculus (Mouse), this protein is Latent-transforming growth factor beta-binding protein 1.